We begin with the raw amino-acid sequence, 307 residues long: Ribonuclease Z (307 aa).

Residues His61, His63, Asp65, His66, His138, Asp207, and His265 each coordinate Zn(2+). Asp65 serves as the catalytic Proton acceptor.

This sequence belongs to the RNase Z family. In terms of assembly, homodimer. Requires Zn(2+) as cofactor.

It catalyses the reaction Endonucleolytic cleavage of RNA, removing extra 3' nucleotides from tRNA precursor, generating 3' termini of tRNAs. A 3'-hydroxy group is left at the tRNA terminus and a 5'-phosphoryl group is left at the trailer molecule.. Zinc phosphodiesterase, which displays some tRNA 3'-processing endonuclease activity. Probably involved in tRNA maturation, by removing a 3'-trailer from precursor tRNA. This is Ribonuclease Z from Methanothermobacter thermautotrophicus (strain ATCC 29096 / DSM 1053 / JCM 10044 / NBRC 100330 / Delta H) (Methanobacterium thermoautotrophicum).